Consider the following 568-residue polypeptide: Sulfite reductase [NADPH] hemoprotein beta-component (568 aa).

Cysteine 426, cysteine 432, cysteine 471, and cysteine 475 together coordinate [4Fe-4S] cluster. Cysteine 475 is a siroheme binding site.

This sequence belongs to the nitrite and sulfite reductase 4Fe-4S domain family. As to quaternary structure, alpha(8)-beta(8). The alpha component is a flavoprotein, the beta component is a hemoprotein. Siroheme is required as a cofactor. Requires [4Fe-4S] cluster as cofactor.

The catalysed reaction is hydrogen sulfide + 3 NADP(+) + 3 H2O = sulfite + 3 NADPH + 4 H(+). The protein operates within sulfur metabolism; hydrogen sulfide biosynthesis; hydrogen sulfide from sulfite (NADPH route): step 1/1. In terms of biological role, component of the sulfite reductase complex that catalyzes the 6-electron reduction of sulfite to sulfide. This is one of several activities required for the biosynthesis of L-cysteine from sulfate. This is Sulfite reductase [NADPH] hemoprotein beta-component from Xylella fastidiosa (strain M12).